The following is a 274-amino-acid chain: Diaminopimelate epimerase (274 aa).

3 residues coordinate substrate: asparagine 11, glutamine 44, and asparagine 64. Residue cysteine 73 is the Proton donor of the active site. Substrate-binding positions include glycine 74–asparagine 75, asparagine 157, asparagine 190, and glutamate 208–arginine 209. The active-site Proton acceptor is the cysteine 217. Glycine 218–serine 219 lines the substrate pocket.

Belongs to the diaminopimelate epimerase family. In terms of assembly, homodimer.

Its subcellular location is the cytoplasm. It catalyses the reaction (2S,6S)-2,6-diaminopimelate = meso-2,6-diaminopimelate. Its pathway is amino-acid biosynthesis; L-lysine biosynthesis via DAP pathway; DL-2,6-diaminopimelate from LL-2,6-diaminopimelate: step 1/1. Its function is as follows. Catalyzes the stereoinversion of LL-2,6-diaminopimelate (L,L-DAP) to meso-diaminopimelate (meso-DAP), a precursor of L-lysine and an essential component of the bacterial peptidoglycan. The protein is Diaminopimelate epimerase of Pectobacterium atrosepticum (strain SCRI 1043 / ATCC BAA-672) (Erwinia carotovora subsp. atroseptica).